Here is a 143-residue protein sequence, read N- to C-terminus: Large ribosomal subunit protein uL11 (143 aa).

It belongs to the universal ribosomal protein uL11 family. Part of the ribosomal stalk of the 50S ribosomal subunit. Interacts with L10 and the large rRNA to form the base of the stalk. L10 forms an elongated spine to which L12 dimers bind in a sequential fashion forming a multimeric L10(L12)X complex. In terms of processing, one or more lysine residues are methylated.

Functionally, forms part of the ribosomal stalk which helps the ribosome interact with GTP-bound translation factors. This is Large ribosomal subunit protein uL11 from Bifidobacterium longum subsp. infantis (strain ATCC 15697 / DSM 20088 / JCM 1222 / NCTC 11817 / S12).